Here is a 239-residue protein sequence, read N- to C-terminus: MICOS complex subunit mic25a (239 aa).

A lipid anchor (N-myristoyl glycine) is attached at glycine 2. Disordered stretches follow at residues 27-88 (VKLS…KKRY) and 113-133 (DISR…ERAK). Residues 50–78 (NKENQGHQTRTPSTSDAQAPKTQAKTTFP) show a composition bias toward polar residues. Basic and acidic residues predominate over residues 79–88 (DSKEELKKRY). Residues 79 to 166 (DSKEELKKRY…ITQLEKKNEE (88 aa)) adopt a coiled-coil conformation. One can recognise a CHCH domain in the interval 192–234 (EPVCLNLQAQILNCYRENREQTLQCSDLAKEYMQCINAAKKNL). Short sequence motifs (cx9C motif) lie at residues 195-205 (CLNLQAQILNC) and 216-226 (CSDLAKEYMQC). 2 disulfides stabilise this stretch: cysteine 195–cysteine 226 and cysteine 205–cysteine 216.

This sequence belongs to the MICOS complex subunit Mic19 family. Metazoan Mic25 subfamily. In terms of assembly, component of the mitochondrial contact site and cristae organizing system (MICOS) complex (also known as MINOS or MitOS complex).

The protein localises to the mitochondrion inner membrane. In terms of biological role, component of the MICOS complex, a large protein complex of the mitochondrial inner membrane that plays crucial roles in the maintenance of crista junctions, inner membrane architecture, and formation of contact sites to the outer membrane. The protein is MICOS complex subunit mic25a (chchd6a) of Danio rerio (Zebrafish).